The sequence spans 346 residues: uncharacterized protein (346 aa).

A disordered region spans residues 322 to 346 (GRDGGYRETTSPPTGRGRNVRGSHA).

This is an uncharacterized protein from Mycobacterium tuberculosis (strain CDC 1551 / Oshkosh).